The sequence spans 98 residues: Cell division protein FtsB (98 aa).

The Cytoplasmic portion of the chain corresponds to 1–3; sequence MKR. Residues 4–21 traverse the membrane as a helical segment; the sequence is LLIVLIALLAMLEYRLWF. The Periplasmic portion of the chain corresponds to 22 to 98; sequence GDKSLAESFH…GGERDKPSND (77 aa). A coiled-coil region spans residues 31 to 74; that stretch reads HLQEQIKLQQQSNAQLVARNQILREEISDLRSGTEALEERARNE.

It belongs to the FtsB family. Part of a complex composed of FtsB, FtsL and FtsQ.

It is found in the cell inner membrane. Functionally, essential cell division protein. May link together the upstream cell division proteins, which are predominantly cytoplasmic, with the downstream cell division proteins, which are predominantly periplasmic. This is Cell division protein FtsB from Shewanella halifaxensis (strain HAW-EB4).